Reading from the N-terminus, the 289-residue chain is Phosphatidylglycerol--prolipoprotein diacylglyceryl transferase (289 aa).

7 helical membrane-spanning segments follow: residues 17-37 (LAVR…ILLG), 57-77 (MLFY…IFFY), 89-109 (IFAV…VIAA), 121-141 (WLVV…AGRI), 174-194 (QLYE…IYSA), 200-220 (GAVS…AEFF), and 235-255 (ISMG…MLVW). Arg140 contributes to the a 1,2-diacyl-sn-glycero-3-phospho-(1'-sn-glycerol) binding site.

The protein belongs to the Lgt family.

It localises to the cell inner membrane. The enzyme catalyses L-cysteinyl-[prolipoprotein] + a 1,2-diacyl-sn-glycero-3-phospho-(1'-sn-glycerol) = an S-1,2-diacyl-sn-glyceryl-L-cysteinyl-[prolipoprotein] + sn-glycerol 1-phosphate + H(+). It participates in protein modification; lipoprotein biosynthesis (diacylglyceryl transfer). Catalyzes the transfer of the diacylglyceryl group from phosphatidylglycerol to the sulfhydryl group of the N-terminal cysteine of a prolipoprotein, the first step in the formation of mature lipoproteins. In Nitrosospira multiformis (strain ATCC 25196 / NCIMB 11849 / C 71), this protein is Phosphatidylglycerol--prolipoprotein diacylglyceryl transferase.